The primary structure comprises 187 residues: Transcriptional repressor NrdR (187 aa).

The interval 1-21 is disordered; the sequence is MQCPYCQHTNSRVLESRSSEG. A zinc finger lies at 3-34; the sequence is CPYCQHTNSRVLESRSSEGGQSIRRRRECLNC. Residues 49–139 form the ATP-cone domain; the sequence is ITVIKHDGKK…VYGRFKGIKD (91 aa). Polar residues-rich tracts occupy residues 152–162 and 170–187; these read ISSPMSQWSKS and SQTS…ENSR. The interval 152–187 is disordered; the sequence is ISSPMSQWSKSSTRDRDQSQTSPCLSLTHNGSENSR.

The protein belongs to the NrdR family. Zn(2+) serves as cofactor.

In terms of biological role, negatively regulates transcription of bacterial ribonucleotide reductase nrd genes and operons by binding to NrdR-boxes. The protein is Transcriptional repressor NrdR of Crocosphaera subtropica (strain ATCC 51142 / BH68) (Cyanothece sp. (strain ATCC 51142)).